We begin with the raw amino-acid sequence, 394 residues long: MAVLDLALQGLAIFGCVLFFVLWFMHFLSIVYTRLHLNKKISDKQPYSKLPGVSLLKPLKGVDPNLINNLETFFELDYPKFEILLCVQDLDDPAVDVCKKLLGKYPSDDAKLFIGGKKVGINPKINNLMPGYEVAKYDLIWICDSGIKVKPDTLTDMANQMTEKVGLVHGLPYVADRQGFAATLEQVYFGTSHPRSYISANVTGFKCVTGMSCLMRKEVLDQAGGLIAFAQYIAEDYFMAKAIADRGWKFSMATQVAMQNSGCYSISQFQSRMIRWAKLRINMLPATIICEPISECFVASLIIGWAAHHIFRWDIMVFFMCHCLAWFIFDYIQLRGVQGGPLNFSKLDYAVAWFIRESMTIYIFLSALWDPTISWRTGRFRLRCGGTAEEILDV.

Over 1 to 10 (MAVLDLALQG) the chain is Lumenal. The chain crosses the membrane as a helical span at residues 11–32 (LAIFGCVLFFVLWFMHFLSIVY). Residues 33 to 195 (TRLHLNKKIS…QVYFGTSHPR (163 aa)) are Cytoplasmic-facing. Residue D92 is a short sequence motif, D1. D144 is a short sequence motif (D2). Residues 196–215 (SYISANVTGFKCVTGMSCLM) form a helical membrane-spanning segment. At 216–287 (RKEVLDQAGG…KLRINMLPAT (72 aa)) the chain is on the lumenal side. Residue D236 is a short sequence motif, D3. Catalysis depends on D236, which acts as the Proton acceptor. The short motif at 272–276 (RMIRW) is the (Q/R)XXRW element. The chain crosses the membrane as a helical span at residues 288–304 (IICEPISECFVASLIIG). The Cytoplasmic portion of the chain corresponds to 305–309 (WAAHH). Residues 310-328 (IFRWDIMVFFMCHCLAWFI) traverse the membrane as a helical segment. At 329-348 (FDYIQLRGVQGGPLNFSKLD) the chain is on the lumenal side. The chain crosses the membrane as a helical span at residues 349-369 (YAVAWFIRESMTIYIFLSALW). Residues 370–394 (DPTISWRTGRFRLRCGGTAEEILDV) lie on the Cytoplasmic side of the membrane.

It belongs to the glycosyltransferase 2 family. In terms of tissue distribution, at the late gastrula stage, weakly expressed ubiquitously. As neurulation proceeds (stages 15-16), expression moves towards the dorsal structures: involuted paraxial mesoderm and neural folds. In the tailbud embryo (stage 28), expression is restricted to the notochord. At later stages (stage 35), expression remains in the notochord and also appears weakly in the cephalic region.

The protein localises to the golgi apparatus membrane. The catalysed reaction is an N-acylsphing-4-enine + UDP-alpha-D-glucose = a beta-D-glucosyl-(1&lt;-&gt;1')-N-acylsphing-4-enine + UDP + H(+). It carries out the reaction UDP-alpha-D-xylose + an N-acylsphing-4-enine = a beta-D-xylosyl-(1&lt;-&gt;1')-N-acylsphing-4-enine + UDP + H(+). It catalyses the reaction N-(9Z-octadecenoyl)-sphing-4-enine + UDP-alpha-D-xylose = beta-D-xylosyl-(1&lt;-&gt;1')-N-(9Z-octadecenoyl)-sphing-4-enine + UDP + H(+). It functions in the pathway lipid metabolism; sphingolipid metabolism. In terms of biological role, participates in the initial step of the glucosylceramide-based glycosphingolipid/GSL synthetic pathway at the cytosolic surface of the Golgi. Catalyzes the transfer of glucose from UDP-glucose to ceramide to produce glucosylceramide/GlcCer (such as beta-D-glucosyl-(1&lt;-&gt;1')-N-acylsphing-4-enine). Glucosylceramide is the core component of glycosphingolipids/GSLs, amphipathic molecules consisting of a ceramide lipid moiety embedded in the outer leaflet of the membrane, linked to one of hundreds of different externally oriented oligosaccharide structures. Glycosphingolipids are essential components of membrane microdomains that mediate membrane trafficking and signal transduction. They are implicated in many fundamental cellular processes, including growth, differentiation, migration, morphogenesis, cell-to-cell and cell-to-matrix interactions. Glycosphingolipids are required for convergence extension movements during early development. Catalyzes the synthesis of xylosylceramide/XylCer (such as beta-D-xylosyl-(1&lt;-&gt;1')-N-acylsphing-4-enine) using UDP-Xyl as xylose donor. This Xenopus laevis (African clawed frog) protein is Ceramide glucosyltransferase-A (ugcg-a).